We begin with the raw amino-acid sequence, 453 residues long: Glutamyl-tRNA(Gln) amidotransferase subunit A (453 aa).

Residues Lys56 and Ser131 each act as charge relay system in the active site. Ser155 acts as the Acyl-ester intermediate in catalysis.

It belongs to the amidase family. GatA subfamily. In terms of assembly, heterotrimer of A, B and C subunits.

The catalysed reaction is L-glutamyl-tRNA(Gln) + L-glutamine + ATP + H2O = L-glutaminyl-tRNA(Gln) + L-glutamate + ADP + phosphate + H(+). Its function is as follows. Allows the formation of correctly charged Gln-tRNA(Gln) through the transamidation of misacylated Glu-tRNA(Gln) in organisms which lack glutaminyl-tRNA synthetase. The reaction takes place in the presence of glutamine and ATP through an activated gamma-phospho-Glu-tRNA(Gln). This chain is Glutamyl-tRNA(Gln) amidotransferase subunit A, found in Campylobacter jejuni (strain RM1221).